Reading from the N-terminus, the 394-residue chain is Elongation factor Tu (394 aa).

In terms of domain architecture, tr-type G spans 10–204 (RTHINVGTIG…ILDNYIPEPK (195 aa)). The interval 19 to 26 (GHVDHGKT) is G1. 19 to 26 (GHVDHGKT) is a GTP binding site. Thr-26 serves as a coordination point for Mg(2+). The segment at 60-64 (GITIN) is G2. Positions 81–84 (DCPG) are G3. Residues 81–85 (DCPGH) and 136–139 (NKCD) each bind GTP. Residues 136-139 (NKCD) form a G4 region. The G5 stretch occupies residues 174–176 (SAL).

Belongs to the TRAFAC class translation factor GTPase superfamily. Classic translation factor GTPase family. EF-Tu/EF-1A subfamily. As to quaternary structure, monomer.

It localises to the cytoplasm. The catalysed reaction is GTP + H2O = GDP + phosphate + H(+). GTP hydrolase that promotes the GTP-dependent binding of aminoacyl-tRNA to the A-site of ribosomes during protein biosynthesis. The polypeptide is Elongation factor Tu (Blochmanniella floridana).